Reading from the N-terminus, the 119-residue chain is Large ribosomal subunit protein bL20 (119 aa).

The protein belongs to the bacterial ribosomal protein bL20 family.

Functionally, binds directly to 23S ribosomal RNA and is necessary for the in vitro assembly process of the 50S ribosomal subunit. It is not involved in the protein synthesizing functions of that subunit. The sequence is that of Large ribosomal subunit protein bL20 from Listeria innocua serovar 6a (strain ATCC BAA-680 / CLIP 11262).